A 452-amino-acid chain; its full sequence is Isocitrate dehydrogenase [NADP], mitochondrial (452 aa).

A mitochondrion-targeting transit peptide spans M1–Y39. An N6-acetyllysine mark is found at K45, K48, K67, and K69. Residues K80 and K106 each carry the N6-acetyllysine; alternate modification. K80 and K106 each carry N6-succinyllysine; alternate. NADP(+) contacts are provided by residues T115–T117 and R122. T117 is a binding site for D-threo-isocitrate. D-threo-isocitrate-binding positions include S134 to R140 and R149. An N6-acetyllysine modification is found at K155. At K166 the chain carries N6-acetyllysine; alternate. K166 is modified (N6-succinyllysine; alternate). R172 is a binding site for D-threo-isocitrate. K180 and K193 each carry N6-acetyllysine; alternate. An N6-succinyllysine; alternate mark is found at K180 and K193. At K199 the chain carries N6-acetyllysine. Position 256 is an N6-acetyllysine; alternate (K256). K256 is modified (N6-succinyllysine; alternate). N6-acetyllysine is present on residues K263, K272, K275, and K280. K282 is modified (N6-acetyllysine; alternate). The residue at position 282 (K282) is an N6-succinyllysine; alternate. D291 contributes to the Mn(2+) binding site. NADP(+) is bound at residue K299. A Mn(2+)-binding site is contributed by D314. NADP(+) contacts are provided by residues G349–H354 and N367. K384 is modified (N6-acetyllysine; alternate). N6-succinyllysine; alternate is present on K384. An N6-acetyllysine mark is found at K400, K413, and K442.

Belongs to the isocitrate and isopropylmalate dehydrogenases family. As to quaternary structure, homodimer. Mg(2+) serves as cofactor. Mn(2+) is required as a cofactor. Post-translationally, acetylation at Lys-413 dramatically reduces catalytic activity. Deacetylated by SIRT3.

The protein resides in the mitochondrion. The enzyme catalyses D-threo-isocitrate + NADP(+) = 2-oxoglutarate + CO2 + NADPH. Plays a role in intermediary metabolism and energy production. It may tightly associate or interact with the pyruvate dehydrogenase complex. The chain is Isocitrate dehydrogenase [NADP], mitochondrial (IDH2) from Bos taurus (Bovine).